Here is a 592-residue protein sequence, read N- to C-terminus: Dictomallein-1 (592 aa).

An N-terminal signal peptide occupies residues 1–19 (MKILIILLVFLNLITNINC). The 263-residue stretch at 140–402 (PNIGHETNLN…QNYFKDSIIY (263 aa)) folds into the Peptidase M66 domain. A Zn(2+)-binding site is contributed by His294. Glu295 is an active-site residue. His298 and His304 together coordinate Zn(2+).

Belongs to the dictomallein family. It depends on Zn(2+) as a cofactor.

Its subcellular location is the secreted. This Dictyostelium discoideum (Social amoeba) protein is Dictomallein-1 (dtmlA).